The following is a 175-amino-acid chain: Adenine phosphoribosyltransferase (175 aa).

The protein belongs to the purine/pyrimidine phosphoribosyltransferase family. In terms of assembly, homodimer.

Its subcellular location is the cytoplasm. The enzyme catalyses AMP + diphosphate = 5-phospho-alpha-D-ribose 1-diphosphate + adenine. It participates in purine metabolism; AMP biosynthesis via salvage pathway; AMP from adenine: step 1/1. Its function is as follows. Catalyzes a salvage reaction resulting in the formation of AMP, that is energically less costly than de novo synthesis. The polypeptide is Adenine phosphoribosyltransferase (Caldicellulosiruptor saccharolyticus (strain ATCC 43494 / DSM 8903 / Tp8T 6331)).